We begin with the raw amino-acid sequence, 886 residues long: Protein O-mannosyltransferase 1 (886 aa).

Polar residues-rich tracts occupy residues 1–10 (MSATYTNTIT) and 18–34 (VRQQQQHQWTGSDLSGE). 2 disordered regions span residues 1–37 (MSATYTNTITQRRKTAKVRQQQQHQWTGSDLSGESNE) and 88–161 (RGSV…KTAN). Low complexity predominate over residues 105-139 (PTPVATPKQASPSPTSDRSRSLSRSPSPSRSRSLS). Residues Asn161 and Asn242 are each glycosylated (N-linked (GlcNAc...) asparagine). 4 consecutive transmembrane segments (helical) span residues 256–276 (MPIFWFRFLPAMCGSLLAPAV), 310–330 (VLMESMLLLATTVGIACLLRF), 349–369 (VCLGAAGTVKYVGFLALGLAF), and 398–418 (LLIFVGIPLAVYLGVFYIHFK). 3 consecutive MIR domains span residues 450–511 (PLAV…VKRP), 522–579 (PDII…VEIL), and 585–642 (GDIW…VEEH). Transmembrane regions (helical) follow at residues 727–747 (ILLWYTATMGILVYAGLLAFY), 791–811 (LFLHNYLPAFVFKLLLLCFVV), and 835–855 (LMLILWLVGVLSIFSKFIPFS).

The protein belongs to the glycosyltransferase 39 family. Interacts with tw/POMT2. At the cellular blastoderm stage, expression accumulates in the ventrally located mesoderm primordium. At germ band extension, mesoderm expression is seen as stripes of strong expression. A very strong signal is also detected in the invaginating gut. As the germ band retracts, mesodermal expression decays and becomes restricted to somatic muscle precursors. After dorsal closure, expression has disappeared from the mesoderm and remains in the endoderm. Some expression is detected in a few cells of the head and the pharyngeal muscles.

The protein localises to the endoplasmic reticulum membrane. It carries out the reaction a di-trans,poly-cis-dolichyl beta-D-mannosyl phosphate + L-seryl-[protein] = 3-O-(alpha-D-mannosyl)-L-seryl-[protein] + a di-trans,poly-cis-dolichyl phosphate + H(+). It catalyses the reaction a di-trans,poly-cis-dolichyl beta-D-mannosyl phosphate + L-threonyl-[protein] = 3-O-(alpha-D-mannosyl)-L-threonyl-[protein] + a di-trans,poly-cis-dolichyl phosphate + H(+). The protein operates within protein modification; protein glycosylation. Functionally, rt/POMT1 and tw/POMT2 function as a protein O-mannosyltransferase in association with each other to generate and maintain normal muscle development. The sequence is that of Protein O-mannosyltransferase 1 from Drosophila melanogaster (Fruit fly).